Consider the following 540-residue polypeptide: Dynein axonemal assembly factor 3 homolog (540 aa).

The segment at 480 to 499 is disordered; sequence AVTEAMPESTFKYDTDTDYG.

The protein belongs to the DNAAF3 family. In terms of tissue distribution, expressed in mechanosensory chordotonal (Ch) neurons, spermatocytes and spermatids (at protein level).

Its subcellular location is the cytoplasm. It is found in the dynein axonemal particle. Its function is as follows. Required for the assembly of axonemal inner and outer dynein arms. Involved in the cytoplasmic preassembly of dyneins into complexes before their transport into cilia. Essential for the development of axonemal dynein motors in the sensory cilium of mechanosensory chordotonal (Ch) neurons and sperm flagellum, and consequently, is required for the mechanotransduction process of hearing and sperm mobility. This chain is Dynein axonemal assembly factor 3 homolog, found in Drosophila melanogaster (Fruit fly).